The primary structure comprises 132 residues: Fatty acid-binding protein 1 (132 aa).

N-acetylalanine is present on Ala2.

This sequence belongs to the calycin superfamily. Fatty-acid binding protein (FABP) family.

The protein is Fatty acid-binding protein 1 (FABP-1) of Fasciola gigantica (Giant liver fluke).